The chain runs to 239 residues: Norbelladine 4'-O-methyltransferase 4 (239 aa).

Residues Val55, Glu77, Gly79 to Val80, Ser85, Asp103, and Ala132 each bind S-adenosyl-L-methionine. An a divalent metal cation-binding site is contributed by Asp155. S-adenosyl-L-methionine is bound at residue Asp157. The a divalent metal cation site is built by Asp181 and Asn182.

It belongs to the class I-like SAM-binding methyltransferase superfamily. Cation-dependent O-methyltransferase family. Mg(2+) serves as cofactor.

It catalyses the reaction norbelladine + S-adenosyl-L-methionine = 4'-O-methylnorbelladine + S-adenosyl-L-homocysteine + H(+). It functions in the pathway alkaloid biosynthesis. In terms of biological role, 4'-O-methyltransferase converting norbelladine to 4'-O-methylnorbelladine. 4'-O-methylnorbelladine is a precursor to all Amaryllidaceae alkaloids such as galanthamine, lycorine and haemanthamine, and including haemanthamine- and crinamine-type alkaloids, promising anticancer agents. The sequence is that of Norbelladine 4'-O-methyltransferase 4 from Narcissus aff. pseudonarcissus MK-2014 (Daffodil).